Reading from the N-terminus, the 303-residue chain is Cysteine synthase B (303 aa).

Position 41 is an N6-(pyridoxal phosphate)lysine (lysine 41). Residues asparagine 71, 174–178 (GTTGT), and serine 255 contribute to the pyridoxal 5'-phosphate site.

This sequence belongs to the cysteine synthase/cystathionine beta-synthase family. Pyridoxal 5'-phosphate serves as cofactor.

It carries out the reaction O-acetyl-L-serine + hydrogen sulfide = L-cysteine + acetate. It participates in amino-acid biosynthesis; L-cysteine biosynthesis; L-cysteine from L-serine: step 2/2. In terms of biological role, two cysteine synthase enzymes are found. Both catalyze the same reaction. Cysteine synthase B can also use thiosulfate in place of sulfide to give cysteine thiosulfonate as a product. This Salmonella typhimurium (strain LT2 / SGSC1412 / ATCC 700720) protein is Cysteine synthase B (cysM).